We begin with the raw amino-acid sequence, 368 residues long: Peptide chain release factor 2 (368 aa).

Gln250 carries the post-translational modification N5-methylglutamine.

The protein belongs to the prokaryotic/mitochondrial release factor family. In terms of processing, methylated by PrmC. Methylation increases the termination efficiency of RF2.

It localises to the cytoplasm. In terms of biological role, peptide chain release factor 2 directs the termination of translation in response to the peptide chain termination codons UGA and UAA. This chain is Peptide chain release factor 2, found in Chlamydia trachomatis serovar L2b (strain UCH-1/proctitis).